Reading from the N-terminus, the 66-residue chain is Opicalcin-2 (66 aa).

An N-terminal signal peptide occupies residues 1 to 22 (MKPSLIIVTFIVVFMTISCVAA). The propeptide occupies 23–31 (DDEQETWIE). 3 disulfide bridges follow: Cys-36–Cys-50, Cys-43–Cys-54, and Cys-49–Cys-65. The tract at residues 55 to 57 (KRR) is essential for stimulation of [3H]ryanodine binding to RYR1.

This sequence belongs to the scorpion calcin family. Expressed by the venom gland.

It is found in the secreted. This toxin stabilizes ryanodine receptor 1 (RyR1) opening in a long-lasting subconductance state (40% of the full conductance state). Furthermore, it triggers calcium release from sarcoplasmic vesicles (64.2 nM are enough to induce a sharp release, and 50% of the total calcium is released after toxin (100 nM) addition) probably by acting as a cell-penetrating peptide (CPP). In addition, it has been shown to dose-dependently stimulate ryanodine binding to RyR1 (EC(50)=3.2 nM). It also augments the bell-shaped calcium-[3H]ryanodine binding curve that is maximal at about 10 uM calcium concentration. It binds a different site as ryanodine. It acts synergistically with caffeine. In vivo, intracerebroventricular injection into mice induces neurotoxic symptoms, followed by death. The sequence is that of Opicalcin-2 from Opistophthalmus carinatus (African yellow leg scorpion).